We begin with the raw amino-acid sequence, 177 residues long: Dynein light chain Tctex-type 5-A (177 aa).

This sequence belongs to the dynein light chain Tctex-type family.

The protein is Dynein light chain Tctex-type 5-A (Dynlt5-a) of Xenopus laevis (African clawed frog).